Consider the following 528-residue polypeptide: Chromosomal replication initiator protein DnaA (528 aa).

Positions 1 to 104 (MNDDPNALAR…PVDDEPESDP (104 aa)) are domain I, interacts with DnaA modulators. The tract at residues 95-158 (PVDDEPESDP…TDFEEVDDDR (64 aa)) is disordered. A compositionally biased stretch (basic and acidic residues) spans 104–123 (PPSRDHRPEPEPLHTPRHLE). The tract at residues 105-187 (PSRDHRPEPE…GPAPSATGGN (83 aa)) is domain II. Over residues 149 to 158 (TDFEEVDDDR) the composition is skewed to acidic residues. Positions 188–404 (SLNAKYTFDT…GALIRVTAFA (217 aa)) are domain III, AAA+ region. Residues G232, G234, K235, and T236 each contribute to the ATP site. The tract at residues 405–528 (SLNRQPLDLT…TARIKQRSKR (124 aa)) is domain IV, binds dsDNA.

Belongs to the DnaA family. In terms of assembly, oligomerizes as a right-handed, spiral filament on DNA at oriC.

It is found in the cytoplasm. Functionally, plays an essential role in the initiation and regulation of chromosomal replication. ATP-DnaA binds to the origin of replication (oriC) to initiate formation of the DNA replication initiation complex once per cell cycle. Binds the DnaA box (a 9 base pair repeat at the origin) and separates the double-stranded (ds)DNA. Forms a right-handed helical filament on oriC DNA; dsDNA binds to the exterior of the filament while single-stranded (ss)DNA is stabiized in the filament's interior. The ATP-DnaA-oriC complex binds and stabilizes one strand of the AT-rich DNA unwinding element (DUE), permitting loading of DNA polymerase. After initiation quickly degrades to an ADP-DnaA complex that is not apt for DNA replication. Binds acidic phospholipids. The chain is Chromosomal replication initiator protein DnaA from Rhodococcus jostii (strain RHA1).